The sequence spans 689 residues: Glycine--tRNA ligase beta subunit (689 aa).

This sequence belongs to the class-II aminoacyl-tRNA synthetase family. Tetramer of two alpha and two beta subunits.

The protein resides in the cytoplasm. The enzyme catalyses tRNA(Gly) + glycine + ATP = glycyl-tRNA(Gly) + AMP + diphosphate. In Shewanella woodyi (strain ATCC 51908 / MS32), this protein is Glycine--tRNA ligase beta subunit.